Here is a 283-residue protein sequence, read N- to C-terminus: 4-hydroxy-3-methylbut-2-enyl diphosphate reductase (283 aa).

Position 12 (Cys12) interacts with [4Fe-4S] cluster. (2E)-4-hydroxy-3-methylbut-2-enyl diphosphate is bound by residues His40 and His73. The dimethylallyl diphosphate site is built by His40 and His73. Positions 40 and 73 each coordinate isopentenyl diphosphate. Cys95 contributes to the [4Fe-4S] cluster binding site. Residue His123 coordinates (2E)-4-hydroxy-3-methylbut-2-enyl diphosphate. His123 contacts dimethylallyl diphosphate. His123 serves as a coordination point for isopentenyl diphosphate. Glu125 serves as the catalytic Proton donor. Thr161 is a (2E)-4-hydroxy-3-methylbut-2-enyl diphosphate binding site. Cys189 is a [4Fe-4S] cluster binding site. The (2E)-4-hydroxy-3-methylbut-2-enyl diphosphate site is built by Ser217, Asn219, and Ser261. Dimethylallyl diphosphate contacts are provided by Ser217, Asn219, and Ser261. Isopentenyl diphosphate contacts are provided by Ser217, Asn219, and Ser261.

Belongs to the IspH family. Requires [4Fe-4S] cluster as cofactor.

The enzyme catalyses isopentenyl diphosphate + 2 oxidized [2Fe-2S]-[ferredoxin] + H2O = (2E)-4-hydroxy-3-methylbut-2-enyl diphosphate + 2 reduced [2Fe-2S]-[ferredoxin] + 2 H(+). It carries out the reaction dimethylallyl diphosphate + 2 oxidized [2Fe-2S]-[ferredoxin] + H2O = (2E)-4-hydroxy-3-methylbut-2-enyl diphosphate + 2 reduced [2Fe-2S]-[ferredoxin] + 2 H(+). It participates in isoprenoid biosynthesis; dimethylallyl diphosphate biosynthesis; dimethylallyl diphosphate from (2E)-4-hydroxy-3-methylbutenyl diphosphate: step 1/1. Its pathway is isoprenoid biosynthesis; isopentenyl diphosphate biosynthesis via DXP pathway; isopentenyl diphosphate from 1-deoxy-D-xylulose 5-phosphate: step 6/6. Catalyzes the conversion of 1-hydroxy-2-methyl-2-(E)-butenyl 4-diphosphate (HMBPP) into a mixture of isopentenyl diphosphate (IPP) and dimethylallyl diphosphate (DMAPP). Acts in the terminal step of the DOXP/MEP pathway for isoprenoid precursor biosynthesis. The protein is 4-hydroxy-3-methylbut-2-enyl diphosphate reductase of Citrifermentans bemidjiense (strain ATCC BAA-1014 / DSM 16622 / JCM 12645 / Bem) (Geobacter bemidjiensis).